Here is a 220-residue protein sequence, read N- to C-terminus: dTTP/UTP pyrophosphatase (220 aa).

Aspartate 83 acts as the Proton acceptor in catalysis.

Belongs to the Maf family. YhdE subfamily. The cofactor is a divalent metal cation.

The protein localises to the cytoplasm. It catalyses the reaction dTTP + H2O = dTMP + diphosphate + H(+). It carries out the reaction UTP + H2O = UMP + diphosphate + H(+). Nucleoside triphosphate pyrophosphatase that hydrolyzes dTTP and UTP. May have a dual role in cell division arrest and in preventing the incorporation of modified nucleotides into cellular nucleic acids. The protein is dTTP/UTP pyrophosphatase of Syntrophotalea carbinolica (strain DSM 2380 / NBRC 103641 / GraBd1) (Pelobacter carbinolicus).